A 149-amino-acid polypeptide reads, in one-letter code: FAD synthase (149 aa).

ATP is bound by residues 9 to 10 (TF), 14 to 17 (HPGH), Asn-92, and Tyr-119.

It belongs to the archaeal FAD synthase family. In terms of assembly, homodimer. Requires a divalent metal cation as cofactor.

The catalysed reaction is FMN + ATP + H(+) = FAD + diphosphate. The protein operates within cofactor biosynthesis; FAD biosynthesis; FAD from FMN: step 1/1. Catalyzes the transfer of the AMP portion of ATP to flavin mononucleotide (FMN) to produce flavin adenine dinucleotide (FAD) coenzyme. The sequence is that of FAD synthase from Methanoculleus marisnigri (strain ATCC 35101 / DSM 1498 / JR1).